A 401-amino-acid chain; its full sequence is Argininosuccinate synthase (401 aa).

Residues 9–17 (AYSGGLDTS) and alanine 35 contribute to the ATP site. Tyrosine 86 contributes to the L-citrulline binding site. Glycine 116 serves as a coordination point for ATP. L-aspartate contacts are provided by threonine 118, asparagine 122, and aspartate 123. Asparagine 122 is an L-citrulline binding site. Residues arginine 126, serine 175, serine 184, glutamate 261, and tyrosine 273 each contribute to the L-citrulline site.

Belongs to the argininosuccinate synthase family. Type 1 subfamily. In terms of assembly, homotetramer.

The protein resides in the cytoplasm. It carries out the reaction L-citrulline + L-aspartate + ATP = 2-(N(omega)-L-arginino)succinate + AMP + diphosphate + H(+). Its pathway is amino-acid biosynthesis; L-arginine biosynthesis; L-arginine from L-ornithine and carbamoyl phosphate: step 2/3. The polypeptide is Argininosuccinate synthase (Aquifex aeolicus (strain VF5)).